Reading from the N-terminus, the 162-residue chain is Protein NrdI (162 aa).

It belongs to the NrdI family.

In terms of biological role, probably involved in ribonucleotide reductase function. The polypeptide is Protein NrdI (Streptococcus pyogenes serotype M3 (strain ATCC BAA-595 / MGAS315)).